The primary structure comprises 417 residues: MQDNVSQRKWNVESSKSANNAFNPIRRIVDKGGFKPNPNKSTISLSIGDPCVFGNLNILDYANDLLIENIKSSKFNGYPPSTGYEIAREAVAKYVETPTSKLTSKDIIVASGASGAIELAIGVLLNEGDNILVPKPGFPLYECTSKTKFINVKHYNLLEKQGFNVDLEHLRSLIDDKTKAILVNNPSNPCGIVYSKQHLLDIIQVAREYCLPIIADEIYSDLTFGEHKFYPMASLTDKVPILSIGGIAKRFLVPGWRLGWVAIHDRDNIFSNGRIIEGLISLSQVILGPNSLVQSILPKLLDPQNTQVKEWCSTITKTLESHSKLTVDMLSKANGLKPVCSSGTMYQMIEIDCSKYEDIADDNEFVGKLLEEQSVFLLQGTVFSLPNFFRIVFCAPIDKLTEAYERIIEFCETHKKK.

Lys249 is modified (N6-(pyridoxal phosphate)lysine).

Belongs to the class-I pyridoxal-phosphate-dependent aminotransferase family. In terms of assembly, homodimer. It depends on pyridoxal 5'-phosphate as a cofactor.

It carries out the reaction L-tyrosine + 2-oxoglutarate = 3-(4-hydroxyphenyl)pyruvate + L-glutamate. The protein operates within amino-acid degradation; L-phenylalanine degradation; acetoacetate and fumarate from L-phenylalanine: step 2/6. In terms of biological role, transaminase involved in tyrosine breakdown. Converts tyrosine to p-hydroxyphenylpyruvate. Has much lower affinity and transaminase activity towards phenylalanine. This chain is Tyrosine aminotransferase (tat), found in Dictyostelium discoideum (Social amoeba).